The primary structure comprises 115 residues: Putative type I restriction enzyme MpnIIP endonuclease subunit middle part (115 aa).

In terms of biological role, the middle section of a putative type I restriction enzyme that if reconstituted might recognize 5'-GAN(7)TAY-3' and cleave a random distance away. Subunit R is required for both nuclease and ATPase activities, but not for modification. This is Putative type I restriction enzyme MpnIIP endonuclease subunit middle part from Mycoplasma pneumoniae (strain ATCC 29342 / M129 / Subtype 1) (Mycoplasmoides pneumoniae).